The following is a 150-amino-acid chain: MKILIADDNIQKQRVLRTCIEENFGSSDITQTFSFTTTIKALTSSVKFDIILLDMTMPNYDSKEPMNNDGKMRTLAGQDVITKMAYRGITTPTIIVTQFEVFGRHSSLKPISEIAQELIASYPNIVKGYVLFDLQSELWKTDLIKKITEL.

The region spanning 2 to 150 is the Response regulatory domain; it reads KILIADDNIQ…TDLIKKITEL (149 aa). At aspartate 54 the chain carries 4-aspartylphosphate.

Probably phosphorylated by DtcA.

Possible phosphate scavenger member of the two-component regulatory system Detocs that confers resistance to bacteriophage. When the system (DtcA-DtcB-DtcC) is expressed in a susceptible E.coli (strain MG1655) it confers resistance to bacteriophages T2, T4, T5, T7, SECphi4, SECphi6 and SECphi27; the level of resistance varies, resistance to T2, T7 and SECphi4 is not very high. DtcA probably autophosphorylates upon sensing viral infection, and subsequently transfers the phosphate signal to DtcC which activates it, leading to an antiviral defense; DtcB (this subunit) may scavenge phosphorylation signals from accidental activation of DtcA. This chain is Detocs response regulatory protein DtcB, found in Enterobacter cloacae (strain JD6301).